The chain runs to 421 residues: Histidine--tRNA ligase (421 aa).

It belongs to the class-II aminoacyl-tRNA synthetase family. Homodimer.

The protein localises to the cytoplasm. The enzyme catalyses tRNA(His) + L-histidine + ATP = L-histidyl-tRNA(His) + AMP + diphosphate + H(+). The chain is Histidine--tRNA ligase from Francisella tularensis subsp. mediasiatica (strain FSC147).